The chain runs to 581 residues: Multidrug and toxin extrusion protein 2 (581 aa).

The Cytoplasmic portion of the chain corresponds to 1–33 (MDSLQDTVPLDHGGCCPALSRLVPRGFGTEMWT). A helical transmembrane segment spans residues 34–54 (LFALSGPLFLFQVLTFMIYIV). At 55–66 (STVFCGHLGKVE) the chain is on the extracellular side. The helical transmembrane segment at 67 to 87 (LASVTLAVAFVNVCGVSVGVG) threads the bilayer. At 88–119 (LSSACDTLMSQSFGSPNKKHVGVILQRGALVL) the chain is on the cytoplasmic side. Residues 120–140 (LLCCLPCWALFLNTQHILLLF) form a helical membrane-spanning segment. Residues 141–153 (RQDPEVSRLTQDY) are Extracellular-facing. The helical transmembrane segment at 154–174 (VMIFIPGLPVIFLYNLLAKYL) threads the bilayer. Residues 175-183 (QNQKITWPQ) lie on the Cytoplasmic side of the membrane. A helical membrane pass occupies residues 184 to 204 (VLSGVVGNCVNGVANYALVSV). Topologically, residues 205–212 (LNLGVRGS) are extracellular. Residues 213–233 (AYANIISQFAQTVFLLLYIVL) form a helical membrane-spanning segment. Topologically, residues 234 to 253 (KKLHLETWAGWSSQCLQDWG) are cytoplasmic. Residues 254–273 (PFFSLAVPSMLMICVEWWAY) form a helical membrane-spanning segment. Residues 274–317 (EIGSFLMGLLSVVDLSAQAVIYEVATVTYMRHSHHLAYTAHVAR) lie on the Extracellular side of the membrane. A helical membrane pass occupies residues 318-338 (IPLGLSIGVCVRVGMALGAAD). Residues 339 to 346 (TVQAKRSA) lie on the Cytoplasmic side of the membrane. The helical transmembrane segment at 347–367 (VSGVLSIVGISLVLGTLISIL) threads the bilayer. Topologically, residues 368 to 380 (KNQLGHIFTNDED) are extracellular. A helical transmembrane segment spans residues 381–401 (VIALVSQVLPVYSVFHVFEAI). Topologically, residues 402–420 (CCVYGGVLRGTGKQAFGAA) are cytoplasmic. A helical membrane pass occupies residues 421 to 441 (VNAITYYIIGLPLGILLTFVV). The Extracellular portion of the chain corresponds to 442 to 444 (RMR). A helical membrane pass occupies residues 445–465 (IMGLWLGMLACVFLATAAFVA). Over 466-557 (YTARLDWKLA…LSVKQLVIRR (92 aa)) the chain is Cytoplasmic. The tract at residues 481-513 (KHSGQQQQQQRAESTATRSGPEKAVLSSVATGS) is disordered. Residues 558 to 578 (GAALGAASATLMVGLTVRILA) form a helical membrane-spanning segment. Residues 579-581 (TRH) lie on the Extracellular side of the membrane.

This sequence belongs to the multi antimicrobial extrusion (MATE) (TC 2.A.66.1) family.

Its subcellular location is the cell membrane. The protein resides in the apical cell membrane. The enzyme catalyses thiamine(out) + H(+)(in) = thiamine(in) + H(+)(out). It carries out the reaction estrone 3-sulfate(in) + H(+)(out) = estrone 3-sulfate(out) + H(+)(in). The catalysed reaction is creatinine(in) + H(+)(out) = creatinine(out) + H(+)(in). Multidrug efflux pump that functions as a H(+)/organic cation antiporter. Mediates the efflux of cationic compounds, such as the model cations, tetraethylammonium (TEA) and 1-methyl-4-phenylpyridinium (MPP+), the platinum-based drug oxaliplatin or weak bases that are positively charged at physiological pH, cimetidine or the antidiabetic drug metformin. Mediates the efflux of the endogenous compounds creatinine, thiamine and estrone-3-sulfate. Plays a physiological role in the excretion of drugs, toxins and endogenous metabolites through the kidney. This Pongo abelii (Sumatran orangutan) protein is Multidrug and toxin extrusion protein 2 (SLC47A2).